Here is a 327-residue protein sequence, read N- to C-terminus: Regulatory protein MsrR (327 aa).

Over residues 1-18 (MDKETNDNEYRRQSEHRT) the composition is skewed to basic and acidic residues. A disordered region spans residues 1-24 (MDKETNDNEYRRQSEHRTSAPKRK). Residues 1-31 (MDKETNDNEYRRQSEHRTSAPKRKKKKKIRK) lie on the Cytoplasmic side of the membrane. The helical; Signal-anchor for type II membrane protein transmembrane segment at 32 to 52 (LPIILLIVVILLIALVVYIVH) threads the bilayer. Topologically, residues 53–327 (SYNSGVEYAK…QAIKDFLDED (275 aa)) are extracellular.

Belongs to the LytR/CpsA/Psr (LCP) family.

It localises to the cell membrane. Involved in SarA attenuation. Affects resistance to oxacillin and teicoplanin, as well as the synthesis of virulence factors. In Staphylococcus aureus (strain Mu50 / ATCC 700699), this protein is Regulatory protein MsrR (msrR).